A 637-amino-acid polypeptide reads, in one-letter code: MRSSWADSVANAEESAPATGAAPTPVANHQNSRPTRSAYVPPHLRGQAPTTTAAPAPAPGPAAVQPSASVQPSGYAAIVGGSRWAGPASGDGTGAVGGPRQSVGGRGGGGGGGGGWNSRPGWDRRDREPNPFANSEAEEATEVDFDTANTGINFDAYEDIPVETSGHDVPPPVNTFAEIDLGDALNENIRRCKYVKPTPVQRYAIPISIAGRDLMACAQTGSGKTAAFCFPIISGIMSSRPPQRPRGSRTAYPLALILSPTRELSVQIHEEARKFAYQTGVRVVVAYGGAPIHQQLRELERGVEILVATPGRLMDLLERARVSLQMVKYLALDEADRMLDMGFEPQIRKIVEQMDMPPRGVRQTMLFSATFPKEIQRMASDFLADYIFLAVGRVGSSTDLIAQRVEFVLEADKRSYLMDLLHAQKANGTHGKQALTLVFVETKRGADALENWLYTNGFPATSIHGDRTQQEREYALRSFKSGATPILVATDVAARGLDIPHVAHVINFDLPNDIDDYVHRIGRTGRAGKSGLATAFFNEGNLSLARPLCELMQEANQEVPQWLERYSARSSFGGGGGRNRRSGGARFGGRDFRRDNRGGGGGGYGGGGGGYGGGGYGGGGGYGGGYGGGQGSTSSWD.

Disordered stretches follow at residues 1–68 (MRSS…QPSA) and 86–141 (GPAS…EEAT). 2 stretches are compositionally biased toward low complexity: residues 10 to 28 (ANAEESAPATGAAPTPVAN) and 46 to 68 (GQAPTTTAAPAPAPGPAAVQPSA). Gly residues predominate over residues 104–116 (GGRGGGGGGGGGW). The short motif at 174 to 202 (NTFAEIDLGDALNENIRRCKYVKPTPVQR) is the Q motif element. The 185-residue stretch at 205–389 (IPISIAGRDL…SDFLADYIFL (185 aa)) folds into the Helicase ATP-binding domain. 218-225 (AQTGSGKT) contacts ATP. A DEAD box motif is present at residues 333–336 (DEAD). The 152-residue stretch at 416-567 (YLMDLLHAQK…EVPQWLERYS (152 aa)) folds into the Helicase C-terminal domain. The segment at 570-610 (SSFGGGGGRNRRSGGARFGGRDFRRDNRGGGGGGYGGGGGG) is disordered. Residues 588–597 (GGRDFRRDNR) are compositionally biased toward basic and acidic residues. Over residues 598 to 610 (GGGGGGYGGGGGG) the composition is skewed to gly residues.

This sequence belongs to the DEAD box helicase family. DDX3/DED1 subfamily.

The catalysed reaction is ATP + H2O = ADP + phosphate + H(+). In Oryza sativa subsp. japonica (Rice), this protein is DEAD-box ATP-dependent RNA helicase 37 (PL10A).